Reading from the N-terminus, the 296-residue chain is MLHLRSSQMLQMLESSLRKYLPESLKVYGTVFHMNQGNPFKLKALVDKWPDFNTVVVRPREQEMGDDLDQHTNTYQIYSKDPKHCLEFLGTPDVINWKQHLQIQSSQSNLNEAIMDLAAGKMVKVKRTQCILYMMPETAKKLVPSLLEDKEYLDHQSGRPRAIDQEMFKLSTLDVTHAPLVDKFWQFGGNERSQRFIGRCIQIFPSSCLLGPEGTPVSWALMDQTGEIRMAGTVPDYRAQGLISHIIYAQTLAMDKRGYPVYNHTEQTNKVIQKMSHTLHHVPMPCDWNQWYCAPL.

Lysine 41 is subject to N6-acetyllysine; alternate. At lysine 41 the chain carries N6-succinyllysine; alternate. Residue lysine 43 is modified to N6-acetyllysine. Lysine 48 carries the N6-acetyllysine; alternate modification. An N6-succinyllysine; alternate modification is found at lysine 48. Lysine 80 and lysine 83 each carry N6-acetyllysine. N6-acetyllysine; alternate occurs at positions 183 and 256. N6-succinyllysine; alternate is present on residues lysine 183 and lysine 256.

The protein belongs to the glycine N-acyltransferase family.

The protein resides in the mitochondrion. The catalysed reaction is an acyl-CoA + glycine = an N-acylglycine + CoA + H(+). Its function is as follows. Mitochondrial acyltransferase which transfers the acyl group to the N-terminus of glycine. Can conjugate a multitude of substrates to form a variety of N-acylglycines. The sequence is that of Glycine N-acyltransferase-like protein (Gm4952) from Mus musculus (Mouse).